The sequence spans 194 residues: UPF0215 protein TV0037 (194 aa).

This sequence belongs to the UPF0215 family.

The polypeptide is UPF0215 protein TV0037 (Thermoplasma volcanium (strain ATCC 51530 / DSM 4299 / JCM 9571 / NBRC 15438 / GSS1)).